A 233-amino-acid polypeptide reads, in one-letter code: UPF0758 protein Rcas_0037 (233 aa).

Positions 107–229 constitute an MPN domain; sequence QIRSPTDAAQ…FVSMRERGLA (123 aa). Zn(2+)-binding residues include histidine 178, histidine 180, and aspartate 191. The short motif at 178-191 is the JAMM motif element; sequence HNHPSGDPTPSPED.

It belongs to the UPF0758 family.

This chain is UPF0758 protein Rcas_0037, found in Roseiflexus castenholzii (strain DSM 13941 / HLO8).